The primary structure comprises 588 residues: Adenine deaminase (588 aa).

This sequence belongs to the metallo-dependent hydrolases superfamily. Adenine deaminase family. As to quaternary structure, homodimer. Requires Mn(2+) as cofactor.

The catalysed reaction is adenine + H2O + H(+) = hypoxanthine + NH4(+). The protein is Adenine deaminase of Shigella sonnei (strain Ss046).